The sequence spans 243 residues: Probable transcriptional regulatory protein BDU_30 (243 aa).

This sequence belongs to the TACO1 family.

It localises to the cytoplasm. The protein is Probable transcriptional regulatory protein BDU_30 of Borrelia duttonii (strain Ly).